The chain runs to 243 residues: MKMHIARDSIVYLLNKHLQNTILTNKIEQECFLQADTPKKYLQYIKPFLINCMTKNITTDLVMKDSKRLEPYITLEMRDIIQMMFFRTLQKHTFFRENTNLCTEYVQKIEASCYHYTYQQQEKTFLEEYSTRCGMINHIINCEKKSHQQQDNDALNKLISGELKPEAIGSMTFAELCPSAALKEKTEITLRSQQKVAEKTSQLYKCPNCKQRMCTYREVQTRALDEPSTIYCTCKKCGHEFIG.

The TFIIS central domain occupies 77 to 201; that stretch reads MRDIIQMMFF…SQQKVAEKTS (125 aa). The TFIIS-type zinc-finger motif lies at 202–242; sequence QLYKCPNCKQRMCTYREVQTRALDEPSTIYCTCKKCGHEFI. 4 residues coordinate Zn(2+): Cys-206, Cys-209, Cys-234, and Cys-237.

The protein belongs to the TFS-II family.

Functionally, putative initiation factor. Necessary for efficient transcription elongation past template-encoded arresting sites. The protein is Transcription factor TFIIS homolog of African swine fever virus (isolate Pig/Kenya/KEN-50/1950) (ASFV).